A 187-amino-acid chain; its full sequence is Cerebral dopamine neurotrophic factor (187 aa).

Positions 1–24 (MRCISPTALVTFCAGFCISNPVLA) are cleaved as a signal peptide. Cystine bridges form between C37–C124, C40–C113, and C71–C82.

This sequence belongs to the ARMET family. Expressed at high levels in the heart, skeletal muscle, testis and brain (at protein level). In the brain, detected in the cerebral cortex neurons through layers II to VI. In the hippocampus, detected in the CA1 to CA3 pyramidal regions and in the granule and polymorph layers of dentate gyrus. Weak expression in the striatum. In substantia nigra, detected in solitary cells that did not express tyrosine hydroxylase, a marker for dopaminergic neurons. Relatively high expression in the Purkinje cells of the cerebellum and in regions of the brain stem, including the locus coeruleus.

The protein resides in the secreted. Its function is as follows. Trophic factor for dopamine neurons. Prevents the 6-hydroxydopamine (6-OHDA)-induced degeneration of dopaminergic neurons. When administered after 6-OHDA-lesioning, restores the dopaminergic function and prevents the degeneration of dopaminergic neurons in substantia nigra. The polypeptide is Cerebral dopamine neurotrophic factor (Cdnf) (Mus musculus (Mouse)).